The primary structure comprises 496 residues: Ribose import ATP-binding protein RbsA (496 aa).

ABC transporter domains are found at residues 5-242 (IEMK…VGRS) and 252-496 (SQIG…TGGE). 37-44 (GENGAGKS) is a binding site for ATP.

Belongs to the ABC transporter superfamily. Ribose importer (TC 3.A.1.2.1) family. As to quaternary structure, the complex is composed of an ATP-binding protein (RbsA), two transmembrane proteins (RbsC) and a solute-binding protein (RbsB).

The protein localises to the cell membrane. The enzyme catalyses D-ribose(out) + ATP + H2O = D-ribose(in) + ADP + phosphate + H(+). Part of the ABC transporter complex RbsABC involved in ribose import. Responsible for energy coupling to the transport system. The sequence is that of Ribose import ATP-binding protein RbsA from Bacillus cereus (strain ATCC 14579 / DSM 31 / CCUG 7414 / JCM 2152 / NBRC 15305 / NCIMB 9373 / NCTC 2599 / NRRL B-3711).